The chain runs to 334 residues: Ornithine carbamoyltransferase (334 aa).

Residues 57–60, Gln-84, Arg-108, and 135–138 each bind carbamoyl phosphate; these read STRT and HPTQ. Residues Asn-169, Asp-233, and 237 to 238 contribute to the L-ornithine site; that span reads SM. Carbamoyl phosphate-binding positions include 275 to 276 and Arg-320; that span reads CL.

Belongs to the aspartate/ornithine carbamoyltransferase superfamily. OTCase family.

The protein localises to the cytoplasm. It carries out the reaction carbamoyl phosphate + L-ornithine = L-citrulline + phosphate + H(+). It functions in the pathway amino-acid biosynthesis; L-arginine biosynthesis; L-arginine from L-ornithine and carbamoyl phosphate: step 1/3. In terms of biological role, reversibly catalyzes the transfer of the carbamoyl group from carbamoyl phosphate (CP) to the N(epsilon) atom of ornithine (ORN) to produce L-citrulline. In Vibrio campbellii (strain ATCC BAA-1116), this protein is Ornithine carbamoyltransferase.